The primary structure comprises 491 residues: UDP-N-acetylmuramoyl-L-alanyl-D-glutamate--2,6-diaminopimelate ligase (491 aa).

Ser-30 provides a ligand contact to UDP-N-acetyl-alpha-D-muramoyl-L-alanyl-D-glutamate. An ATP-binding site is contributed by 108–114 (GTNGKTT). UDP-N-acetyl-alpha-D-muramoyl-L-alanyl-D-glutamate contacts are provided by residues Asn-149, 150–151 (TT), Ser-177, Gln-183, and Arg-185. Lys-217 carries the N6-carboxylysine modification. Residues Arg-383, 407-410 (DNPR), Gly-458, and Glu-462 each bind meso-2,6-diaminopimelate. A Meso-diaminopimelate recognition motif motif is present at residues 407–410 (DNPR).

It belongs to the MurCDEF family. MurE subfamily. Requires Mg(2+) as cofactor. Carboxylation is probably crucial for Mg(2+) binding and, consequently, for the gamma-phosphate positioning of ATP.

It localises to the cytoplasm. It catalyses the reaction UDP-N-acetyl-alpha-D-muramoyl-L-alanyl-D-glutamate + meso-2,6-diaminopimelate + ATP = UDP-N-acetyl-alpha-D-muramoyl-L-alanyl-gamma-D-glutamyl-meso-2,6-diaminopimelate + ADP + phosphate + H(+). Its pathway is cell wall biogenesis; peptidoglycan biosynthesis. In terms of biological role, catalyzes the addition of meso-diaminopimelic acid to the nucleotide precursor UDP-N-acetylmuramoyl-L-alanyl-D-glutamate (UMAG) in the biosynthesis of bacterial cell-wall peptidoglycan. This Listeria monocytogenes serovar 1/2a (strain ATCC BAA-679 / EGD-e) protein is UDP-N-acetylmuramoyl-L-alanyl-D-glutamate--2,6-diaminopimelate ligase.